The primary structure comprises 69 residues: Sodium channel toxin (69 aa).

The region spanning 2-66 (KNDYPVDTAK…SPTKTSGRCN (65 aa)) is the LCN-type CS-alpha/beta domain. Cystine bridges form between Cys-14-Cys-65, Cys-18-Cys-41, Cys-27-Cys-48, and Cys-31-Cys-50.

Belongs to the long (4 C-C) scorpion toxin superfamily. Sodium channel inhibitor family. As to expression, expressed by the venom gland.

The protein resides in the secreted. Its function is as follows. Inhibits voltage-gated sodium channels (Nav). This Tityus metuendus (Scorpion) protein is Sodium channel toxin.